We begin with the raw amino-acid sequence, 175 residues long: ATP synthase subunit b 2 (175 aa).

The helical transmembrane segment at 20 to 40 (LIFWTAVTFVIVLLILKKFAW) threads the bilayer.

The protein belongs to the ATPase B chain family. In terms of assembly, F-type ATPases have 2 components, F(1) - the catalytic core - and F(0) - the membrane proton channel. F(1) has five subunits: alpha(3), beta(3), gamma(1), delta(1), epsilon(1). F(0) has four main subunits: a(1), b(2) and c(10-14). The alpha and beta chains form an alternating ring which encloses part of the gamma chain. F(1) is attached to F(0) by a central stalk formed by the gamma and epsilon chains, while a peripheral stalk is formed by the delta and b chains.

Its subcellular location is the cell inner membrane. Functionally, f(1)F(0) ATP synthase produces ATP from ADP in the presence of a proton or sodium gradient. F-type ATPases consist of two structural domains, F(1) containing the extramembraneous catalytic core and F(0) containing the membrane proton channel, linked together by a central stalk and a peripheral stalk. During catalysis, ATP synthesis in the catalytic domain of F(1) is coupled via a rotary mechanism of the central stalk subunits to proton translocation. Its function is as follows. Component of the F(0) channel, it forms part of the peripheral stalk, linking F(1) to F(0). This is ATP synthase subunit b 2 from Prosthecochloris aestuarii (strain DSM 271 / SK 413).